The following is a 290-amino-acid chain: Small ribosomal subunit protein uS2 (290 aa).

The tract at residues 269 to 290 (WEAEASGDWAAESAQPNPETKW) is disordered.

It belongs to the universal ribosomal protein uS2 family. In terms of assembly, component of the small ribosomal subunit. Mature ribosomes consist of a small (40S) and a large (60S) subunit. The 40S subunit contains about 33 different proteins and 1 molecule of RNA (18S). The 60S subunit contains about 49 different proteins and 3 molecules of RNA (25S, 5.8S and 5S). Interacts with rps21.

It is found in the cytoplasm. Required for the assembly and/or stability of the 40S ribosomal subunit. Required for the processing of the 20S rRNA-precursor to mature 18S rRNA in a late step of the maturation of 40S ribosomal subunits. This Talaromyces marneffei (strain ATCC 18224 / CBS 334.59 / QM 7333) (Penicillium marneffei) protein is Small ribosomal subunit protein uS2 (rps0).